Here is a 270-residue protein sequence, read N- to C-terminus: Calpain small subunit 1 (270 aa).

Position 1 is an N-acetylmethionine (Met-1). A Phosphoserine modification is found at Ser-6. The region spanning 98–132 (EEERQFRKLFVQLAGDDMEVSATELMNILNKVVTR) is the EF-hand 1; atypical domain. Positions 111, 114, 116, 121, 139, 154, 156, 158, 160, and 165 each coordinate Ca(2+). 4 EF-hand domains span residues 141–174 (FGID…NNIK), 171–206 (NNIK…AGFH), 207–235 (LNQH…ISCL), and 236–270 (VRLD…TMYS). N6-acetyllysine is present on Lys-181. Ca(2+) contacts are provided by Asp-184, Asp-186, Ser-188, Thr-190, Glu-195, and Asp-227.

As to quaternary structure, homodimer or heterodimer of a large (catalytic) and a small (regulatory) subunit. In presence of calcium, the heterodimer dissociates.

The protein localises to the cytoplasm. It is found in the cell membrane. Functionally, regulatory subunit of the calcium-regulated non-lysosomal thiol-protease which catalyzes limited proteolysis of substrates involved in cytoskeletal remodeling and signal transduction. Essential for embryonic development. The protein is Calpain small subunit 1 (Capns1) of Rattus norvegicus (Rat).